The primary structure comprises 175 residues: ATP synthase subunit delta (175 aa).

Belongs to the ATPase delta chain family. As to quaternary structure, F-type ATPases have 2 components, F(1) - the catalytic core - and F(0) - the membrane proton channel. F(1) has five subunits: alpha(3), beta(3), gamma(1), delta(1), epsilon(1). F(0) has three main subunits: a(1), b(2) and c(10-14). The alpha and beta chains form an alternating ring which encloses part of the gamma chain. F(1) is attached to F(0) by a central stalk formed by the gamma and epsilon chains, while a peripheral stalk is formed by the delta and b chains.

It is found in the cell membrane. F(1)F(0) ATP synthase produces ATP from ADP in the presence of a proton or sodium gradient. F-type ATPases consist of two structural domains, F(1) containing the extramembraneous catalytic core and F(0) containing the membrane proton channel, linked together by a central stalk and a peripheral stalk. During catalysis, ATP synthesis in the catalytic domain of F(1) is coupled via a rotary mechanism of the central stalk subunits to proton translocation. In terms of biological role, this protein is part of the stalk that links CF(0) to CF(1). It either transmits conformational changes from CF(0) to CF(1) or is implicated in proton conduction. The polypeptide is ATP synthase subunit delta (Lactococcus lactis subsp. cremoris (strain MG1363)).